A 622-amino-acid polypeptide reads, in one-letter code: MALLQISEPGQSTAPHQHRLAVGIDLGTTNSLVATVRSGLSTVLLDEAGKALLPSVVHYAANGQVEVGYAAQRQQSHDPQNTIASAKRFLGRGLNDIGDTSHLPYQFVDVPGMVQIETRAGIKSPVEISAEILKSLKARAEQALGGELTGAVITVPAYFDDAQRQATKDAARIAGINVLRLLNEPTAAAIAYGLDNASEGIYVVYDLGGGTFDVSILRLTKGVFEVLSTNGDSALGGDDFDRRIFHWILEQTHLQAPNPADTRLLMTASKEAKEWLTEHTSANIAVTLSNGKTVDLSLSRTEFHSLTQPLLNRTLVPIRKALRDASLTVKEVKGIVLVGGATRMPQVQQAVADFFGQAPLTNLDPDQVVALGAAIQANILAGNRHDDELLLLDVIPLSLGLETMGGLVEKIIPRNSTLPIARAQDFTTFKDGQTAMSIHVLQGEREMVADCRSLGRFELRGIPPMAAGAARIRVTFQVDADGLLSVSAQEQTSGAHANIVVKPSYGLSEEQITNMLQASFTAAEADKHARALQEARVDAARLLEALEAALRQDGDKLLNDEERTEITRQMEHLRNIAQHEDSDAINKAVDALNHATETFAARRMDASVKQALAGQSLNTLDI.

This sequence belongs to the heat shock protein 70 family.

Functionally, chaperone involved in the maturation of iron-sulfur cluster-containing proteins. Has a low intrinsic ATPase activity which is markedly stimulated by HscB. The sequence is that of Chaperone protein HscA homolog from Methylobacillus flagellatus (strain ATCC 51484 / DSM 6875 / VKM B-1610 / KT).